Here is a 360-residue protein sequence, read N- to C-terminus: Aminomethyltransferase (360 aa).

It belongs to the GcvT family. In terms of assembly, the glycine cleavage system is composed of four proteins: P, T, L and H.

The catalysed reaction is N(6)-[(R)-S(8)-aminomethyldihydrolipoyl]-L-lysyl-[protein] + (6S)-5,6,7,8-tetrahydrofolate = N(6)-[(R)-dihydrolipoyl]-L-lysyl-[protein] + (6R)-5,10-methylene-5,6,7,8-tetrahydrofolate + NH4(+). The glycine cleavage system catalyzes the degradation of glycine. This is Aminomethyltransferase from Legionella pneumophila (strain Corby).